Here is a 153-residue protein sequence, read N- to C-terminus: ORM1-like protein 2 (153 aa).

Residues 1-21 (MNVGVAHSEVNPNTRVMNSRG) are Cytoplasmic-facing. The next 2 membrane-spanning stretches (helical) occupy residues 22–42 (IWLA…SIPF) and 43–63 (FSIP…MYIF). The Cytoplasmic segment spans residues 64 to 105 (LHTVKGTPFETPDQGKARLLTHWEQMDYGLQFTSSRKFLSIS). A helical transmembrane segment spans residues 106–126 (PIVLYLLASFYTKYDAAHFLI). The Extracellular segment spans residues 127 to 153 (NTASLLSVLLPKLPQFHGVRLFGINKY).

This sequence belongs to the ORM family. In terms of assembly, ceramide-sensitive subunit of the serine palmitoyltransferase (SPT) complex, which is also composed of SPTLC1, SPTLC2/3 and SPTSSA/B.

Its subcellular location is the endoplasmic reticulum membrane. Functionally, plays an essential role in the homeostatic regulation of sphingolipid de novo biosynthesis by modulating the activity of the serine palmitoyltransferase (SPT) in response to ceramide levels. When complexed to SPT, the binding of ceramides to its N-terminus stabilizes a conformation that block SPT substrate entry, hence preventing SPT catalytic activity. Through this mechanism, maintains ceramide levels at sufficient concentrations for the production of complex sphingolipids, but which prevents the accumulation of ceramides to levels that trigger apoptosis. The sequence is that of ORM1-like protein 2 (Ormdl2) from Mus musculus (Mouse).